Reading from the N-terminus, the 335-residue chain is Zinc-type alcohol dehydrogenase-like protein SAS2087 (335 aa).

Belongs to the zinc-containing alcohol dehydrogenase family. Quinone oxidoreductase subfamily.

The protein is Zinc-type alcohol dehydrogenase-like protein SAS2087 of Staphylococcus aureus (strain MSSA476).